A 486-amino-acid polypeptide reads, in one-letter code: Probable transporter MCH1 (486 aa).

The next 6 membrane-spanning stretches (helical) occupy residues 31–51 (ISFF…LFSL), 69–89 (FIAS…GYLA), 91–111 (CYGP…SYFV), 132–152 (FGIC…SSLL), 164–184 (LAIS…SQLM), and 204–224 (FFGV…SVVS). The segment at 236-260 (EMEEADEESPLMTSRSRHSHHSCED) is disordered. A helical transmembrane segment spans residues 280-300 (FINFLKDKSAWLLLASLILNI). Residue Asn322 is glycosylated (N-linked (GlcNAc...) asparagine). Transmembrane regions (helical) follow at residues 327–348 (VSIM…SDYL) and 357–377 (ICRV…QFMV). Asn390 carries an N-linked (GlcNAc...) asparagine glycan. The next 2 helical transmembrane spans lie at 395–415 (GGLF…DMMG) and 417–437 (TWGS…IFYG). Asn457 is a glycosylation site (N-linked (GlcNAc...) asparagine). The chain crosses the membrane as a helical span at residues 458-478 (LTAVGLSVSLILIIIVWKGIW).

This sequence belongs to the major facilitator superfamily.

It is found in the vacuole membrane. Functionally, probable transporter. This is Probable transporter MCH1 (MCH1) from Debaryomyces hansenii (strain ATCC 36239 / CBS 767 / BCRC 21394 / JCM 1990 / NBRC 0083 / IGC 2968) (Yeast).